Here is a 907-residue protein sequence, read N- to C-terminus: Probable dipeptidyl-aminopeptidase B (907 aa).

Residues methionine 1 to aspartate 11 show a composition bias toward basic and acidic residues. Positions methionine 1 to leucine 71 are disordered. Over methionine 1 to arginine 88 the chain is Cytoplasmic. Positions serine 22 to serine 36 are enriched in low complexity. The helical; Signal-anchor for type II membrane protein transmembrane segment at alanine 89–valine 109 threads the bilayer. Topologically, residues serine 110–valine 907 are vacuolar. 2 N-linked (GlcNAc...) asparagine glycosylation sites follow: asparagine 185 and asparagine 341. Serine 746 serves as the catalytic Charge relay system. N-linked (GlcNAc...) asparagine glycosylation is present at asparagine 800. Residues aspartate 823 and histidine 856 each act as charge relay system in the active site.

This sequence belongs to the peptidase S9B family.

Its subcellular location is the vacuole membrane. It catalyses the reaction Release of an N-terminal dipeptide, Xaa-Yaa-|-Zaa-, from a polypeptide, preferentially when Yaa is Pro, provided Zaa is neither Pro nor hydroxyproline.. Type IV dipeptidyl-peptidase which removes N-terminal dipeptides sequentially from polypeptides having unsubstituted N-termini provided that the penultimate residue is proline. The polypeptide is Probable dipeptidyl-aminopeptidase B (DAPB) (Tuber melanosporum (strain Mel28) (Perigord black truffle)).